The primary structure comprises 331 residues: 4-hydroxythreonine-4-phosphate dehydrogenase (331 aa).

His136 and Thr137 together coordinate substrate. Positions 166, 211, and 266 each coordinate a divalent metal cation. Residues Lys274, Asn283, and Arg292 each coordinate substrate.

This sequence belongs to the PdxA family. In terms of assembly, homodimer. The cofactor is Zn(2+). Mg(2+) is required as a cofactor. It depends on Co(2+) as a cofactor.

It is found in the cytoplasm. The catalysed reaction is 4-(phosphooxy)-L-threonine + NAD(+) = 3-amino-2-oxopropyl phosphate + CO2 + NADH. It participates in cofactor biosynthesis; pyridoxine 5'-phosphate biosynthesis; pyridoxine 5'-phosphate from D-erythrose 4-phosphate: step 4/5. Its function is as follows. Catalyzes the NAD(P)-dependent oxidation of 4-(phosphooxy)-L-threonine (HTP) into 2-amino-3-oxo-4-(phosphooxy)butyric acid which spontaneously decarboxylates to form 3-amino-2-oxopropyl phosphate (AHAP). The protein is 4-hydroxythreonine-4-phosphate dehydrogenase of Thioalkalivibrio sulfidiphilus (strain HL-EbGR7).